The following is a 62-amino-acid chain: uncharacterized protein (62 aa).

Residues 1 to 13 show a composition bias toward polar residues; sequence MGESKSPQESSSE. Positions 1–62 are disordered; that stretch reads MGESKSPQES…SRREFRRKSG (62 aa). Residues 14 to 28 show a composition bias toward basic and acidic residues; sequence GETKRKFREALDRKM.

This is an uncharacterized protein from Mycobacterium tuberculosis (strain ATCC 25618 / H37Rv).